A 600-amino-acid polypeptide reads, in one-letter code: NADH-quinone oxidoreductase subunit C/D (600 aa).

Residues 1–190 (MVNNMTDLTA…SPFELTKAKQ (190 aa)) form an NADH dehydrogenase I subunit C region. The interval 214 to 600 (DFMFLNLGPN…IDFVMSDVDR (387 aa)) is NADH dehydrogenase I subunit D.

This sequence in the N-terminal section; belongs to the complex I 30 kDa subunit family. The protein in the C-terminal section; belongs to the complex I 49 kDa subunit family. As to quaternary structure, NDH-1 is composed of 13 different subunits. Subunits NuoB, CD, E, F, and G constitute the peripheral sector of the complex.

The protein resides in the cell inner membrane. The enzyme catalyses a quinone + NADH + 5 H(+)(in) = a quinol + NAD(+) + 4 H(+)(out). NDH-1 shuttles electrons from NADH, via FMN and iron-sulfur (Fe-S) centers, to quinones in the respiratory chain. The immediate electron acceptor for the enzyme in this species is believed to be ubiquinone. Couples the redox reaction to proton translocation (for every two electrons transferred, four hydrogen ions are translocated across the cytoplasmic membrane), and thus conserves the redox energy in a proton gradient. This chain is NADH-quinone oxidoreductase subunit C/D, found in Escherichia coli (strain ATCC 8739 / DSM 1576 / NBRC 3972 / NCIMB 8545 / WDCM 00012 / Crooks).